The primary structure comprises 886 residues: DNA mismatch repair protein MutS (886 aa).

626–633 (GPNMGGKS) contacts ATP.

The protein belongs to the DNA mismatch repair MutS family.

Its function is as follows. This protein is involved in the repair of mismatches in DNA. It is possible that it carries out the mismatch recognition step. This protein has a weak ATPase activity. The chain is DNA mismatch repair protein MutS from Burkholderia ambifaria (strain ATCC BAA-244 / DSM 16087 / CCUG 44356 / LMG 19182 / AMMD) (Burkholderia cepacia (strain AMMD)).